We begin with the raw amino-acid sequence, 143 residues long: Transcription antitermination protein NusB (143 aa).

This sequence belongs to the NusB family.

Functionally, involved in transcription antitermination. Required for transcription of ribosomal RNA (rRNA) genes. Binds specifically to the boxA antiterminator sequence of the ribosomal RNA (rrn) operons. The sequence is that of Transcription antitermination protein NusB from Buchnera aphidicola subsp. Acyrthosiphon pisum (strain 5A).